The chain runs to 305 residues: Elongation factor Ts (305 aa).

Residues 81-84 (TDFV) form an involved in Mg(2+) ion dislocation from EF-Tu region.

Belongs to the EF-Ts family.

Its subcellular location is the cytoplasm. Associates with the EF-Tu.GDP complex and induces the exchange of GDP to GTP. It remains bound to the aminoacyl-tRNA.EF-Tu.GTP complex up to the GTP hydrolysis stage on the ribosome. This chain is Elongation factor Ts, found in Nitratiruptor sp. (strain SB155-2).